The following is a 236-amino-acid chain: E3 ubiquitin-protein ligase ATL41 (236 aa).

A helical transmembrane segment spans residues 31–51; that stretch reads IMLAAVASLSGVILIVFALHL. The RING-type; atypical zinc-finger motif lies at 108–150; that stretch reads CAVCLSVLKEQDKARELPNCKHIFHVDCVDTWLTTCSTCPVCR.

This sequence belongs to the RING-type zinc finger family. ATL subfamily.

The protein localises to the membrane. It catalyses the reaction S-ubiquitinyl-[E2 ubiquitin-conjugating enzyme]-L-cysteine + [acceptor protein]-L-lysine = [E2 ubiquitin-conjugating enzyme]-L-cysteine + N(6)-ubiquitinyl-[acceptor protein]-L-lysine.. The protein operates within protein modification; protein ubiquitination. In terms of biological role, E3 ubiquitin-protein ligase able to catalyze polyubiquitination with ubiquitin-conjugating enzyme E2 UBC8, UBC10, UBC11, UBC28, UBC29, UBC30, UBC35 and UBC36 in vitro. This is E3 ubiquitin-protein ligase ATL41 (ATL41) from Arabidopsis thaliana (Mouse-ear cress).